Reading from the N-terminus, the 88-residue chain is Pigment dispersing factor homolog pdf-1 (88 aa).

An N-terminal signal peptide occupies residues 1-21 (MNRFIISMIALLAVFCAVSTA).

Its subcellular location is the secreted. Probable ligand of isoforms a and b of the calcitonin receptor-like protein, pdfr-1, a G-protein coupled receptor. May not signal through isoform c of pdfr-1. Involved in locomotion; more specifically mate searching behavior of males, independent of nutritional status. Involved in regulating the male-specific expression of TGFbeta-like daf-7 in the ASJ chemosensory neurons. Plays a role in circadian rhythms of locomotor activity. Involved in mediating arousal from the sleep-like state called lethargus, which occurs during molting between larval and adult stages, in part by regulating touch sensitivity, and working in concert with neuropeptide flp-2. In the presence of food, plays a role in initiating and extending exploratory roaming behavior, in opposition to 5-hydroxytryptamine (serotonin) signaling. The chain is Pigment dispersing factor homolog pdf-1 from Caenorhabditis elegans.